We begin with the raw amino-acid sequence, 401 residues long: Multidrug resistance protein MdtH (401 aa).

11 consecutive transmembrane segments (helical) span residues 13–33, 34–54, 88–108, 139–159, 164–184, 211–231, 248–268, 275–295, 298–318, 341–361, and 366–386; these read YFLI…FPLI, SIHF…ALGL, IGFI…ACIL, ILML…SWLL, FQLV…FNAW, FIIY…VMLM, YIYI…TYWM, ETRL…IGSV, LYEL…AEPA, LSLA…YDLG, and FYQL…LILY.

It belongs to the major facilitator superfamily. DHA1 family. MdtH (TC 2.A.1.2.21) subfamily.

It localises to the cell inner membrane. This is Multidrug resistance protein MdtH from Blochmanniella floridana.